The sequence spans 575 residues: Melatonin-related receptor (575 aa).

The Extracellular portion of the chain corresponds to 1–30 (MGRTLAVPTPYGCIGCKLPQPDYPPALIVF). A helical transmembrane segment spans residues 31-51 (MFCAMVITIVVDLIGNSMVIL). Residues 52–64 (AVSKNKKLRNSGN) are Cytoplasmic-facing. A helical membrane pass occupies residues 65 to 85 (VFVVSLSVADMLVAIYPYPLM). Topologically, residues 86 to 103 (LHAMAIGGWDLSKLQCQM) are extracellular. An intrachain disulfide couples C101 to C178. The chain crosses the membrane as a helical span at residues 104 to 124 (VGFITGLSVVGSIFNIMAIAI). Over 125–143 (NRYCYICHSLQYERIFSVR) the chain is Cytoplasmic. Residues 144–164 (NTCIYLAVTWIMTVLAVLPNM) traverse the membrane as a helical segment. The Extracellular segment spans residues 165–188 (YIGTIEYDPRTYTCIFNYVNNPAF). The chain crosses the membrane as a helical span at residues 189–209 (AVTIVCIHFVLPLLIVGFCYV). Topologically, residues 210-239 (KIWTKVLAARDPAGQNPDNQLAEVRNFLTM) are cytoplasmic. A helical membrane pass occupies residues 240–260 (FVIFLLFAVCWCPINALTVLV). Topologically, residues 261–273 (AVNPKEMAGKIPN) are extracellular. The helical transmembrane segment at 274 to 294 (WVYLAAYFIAYFNSCLNAVIY) threads the bilayer. Topologically, residues 295–575 (GVLNENFRRE…VDADSDEMAV (281 aa)) are cytoplasmic. Disordered stretches follow at residues 368–421 (VPLP…TVYP) and 446–474 (SSHP…TGYT). Polar residues predominate over residues 455-474 (PSKTAISPATSFPKPTTGYT).

It belongs to the G-protein coupled receptor 1 family. In terms of assembly, homodimer, and heterodimer with MTNR1A and MTNR1B. Interacts with KAT5. Interacts with RTN4 isoform A/NOGO-A. Interacts with TGFBR1.

The protein resides in the cell membrane. Its function is as follows. G protein-coupled receptor that plays a role in numerous physiological processes including regulation of energy metabolism, neurite outgrowth or cell migration. Promotes self-renewal and neuronal differentiation of neural progenitor cells through activation of the NOTCH and WNT/beta-catenin signaling pathways. Modulates the KAT5-dependent glucocorticoid receptor signaling by modulating KAT5 subcellular compartmentalisation. Also plays a role in the activation TGFBR1 in the absence of TGFBR2 by interfering with FKBP1A binding to TGFBR1, leading to induction of both canonical and non-canonical SMAD signaling pathways resulting in inhibition of proliferation or promotion of migration. The sequence is that of Melatonin-related receptor (GPR50) from Ovis aries (Sheep).